Consider the following 135-residue polypeptide: Interleukin-4 (135 aa).

The N-terminal stretch at 1–24 (MGLTYQLIPVLVCLLVCTSHLVHG) is a signal peptide. 3 cysteine pairs are disulfide-bonded: Cys27/Cys135, Cys48/Cys85, and Cys70/Cys105. The N-linked (GlcNAc...) asparagine glycan is linked to Asn62.

It belongs to the IL-4/IL-13 family.

The protein resides in the secreted. In terms of biological role, participates in at least several B-cell activation processes as well as of other cell types. It is a costimulator of DNA-synthesis. It induces the expression of class II MHC molecules on resting B-cells. It enhances both secretion and cell surface expression of IgE and IgG1. It also regulates the expression of the low affinity Fc receptor for IgE (CD23) on both lymphocytes and monocytes. Positively regulates IL31RA expression in macrophages. Stimulates autophagy in dendritic cells by interfering with mTORC1 signaling and through the induction of RUFY4. This Bubalus bubalis (Domestic water buffalo) protein is Interleukin-4 (IL4).